The sequence spans 257 residues: Geranylgeranylglyceryl phosphate synthase (257 aa).

Residues aspartate 27 and threonine 57 each coordinate Mg(2+). Sn-glycerol 1-phosphate contacts are provided by residues 175–181 (YLEAGSG), 207–208 (GG), and 229–230 (GN).

It belongs to the GGGP/HepGP synthase family. Group II subfamily. Requires Mg(2+) as cofactor.

The protein localises to the cytoplasm. It catalyses the reaction sn-glycerol 1-phosphate + (2E,6E,10E)-geranylgeranyl diphosphate = sn-3-O-(geranylgeranyl)glycerol 1-phosphate + diphosphate. It participates in membrane lipid metabolism; glycerophospholipid metabolism. In terms of biological role, prenyltransferase that catalyzes the transfer of the geranylgeranyl moiety of geranylgeranyl diphosphate (GGPP) to the C3 hydroxyl of sn-glycerol-1-phosphate (G1P). This reaction is the first ether-bond-formation step in the biosynthesis of archaeal membrane lipids. This chain is Geranylgeranylglyceryl phosphate synthase, found in Sulfolobus acidocaldarius (strain ATCC 33909 / DSM 639 / JCM 8929 / NBRC 15157 / NCIMB 11770).